A 927-amino-acid polypeptide reads, in one-letter code: Autophagy-related protein 18h (927 aa).

Disordered stretches follow at residues 1–25 and 333–353; these read MKSNSKVNINNNGDNHNQTKNNGTN and DGPGPSLSSSPGRKVGRVGSH. The span at 335-344 shows a compositional bias: low complexity; the sequence is PGPSLSSSPG. WD repeat units follow at residues 379 to 419 and 441 to 482; these read AHTS…TKNG and MTSA…NVLE. Disordered stretches follow at residues 750 to 788 and 844 to 927; these read NRGFSGERDSDSSSSSDPGQVKEMHPFNGMVYPEDEERR and IENS…SEEG. The segment covering 846–859 has biased composition (low complexity); it reads NSSGISGDSNVSSN. Basic and acidic residues predominate over residues 896 to 907; it reads ETEHKDAPSDGK.

The protein belongs to the WD repeat PROPPIN family. In terms of assembly, component of the PI(3,5)P2 regulatory complex at least composed of ATG18, SAC/FIG4, FAB1 and VAC14. In terms of tissue distribution, expressed in roots, flowers and leaves.

The protein localises to the preautophagosomal structure membrane. Its subcellular location is the vacuole membrane. The PI(3,5)P2 regulatory complex regulates both the synthesis and turnover of phosphatidylinositol 3,5-bisphosphate (PtdIns(3,5)P2). Required for autophagy. The chain is Autophagy-related protein 18h (ATG18H) from Arabidopsis thaliana (Mouse-ear cress).